The following is a 526-amino-acid chain: 3',5'-cyclic-nucleotide phosphodiesterase 2 (526 aa).

Residues 182–526 (RNIEFMSFLS…EYWMKHKKPQ (345 aa)) form the PDEase domain. His265 acts as the Proton donor in catalysis. A divalent metal cation contacts are provided by His269, His302, Asp303, and Asp400.

It belongs to the cyclic nucleotide phosphodiesterase family. As to quaternary structure, monomer. A divalent metal cation is required as a cofactor.

The catalysed reaction is 3',5'-cyclic AMP + H2O = AMP + H(+). Its function is as follows. Controls the level of cAMP in yeast cells, together with the low-affinity cAMP phosphodiesterase (PDE1). In Saccharomyces cerevisiae (strain ATCC 204508 / S288c) (Baker's yeast), this protein is 3',5'-cyclic-nucleotide phosphodiesterase 2.